Here is a 114-residue protein sequence, read N- to C-terminus: TYRO protein tyrosine kinase-binding protein (114 aa).

Positions 1-27 are cleaved as a signal peptide; it reads MGAPEPSWCFLFLPVLLTVGGLSPVQA. Over 28-42 the chain is Extracellular; it reads QSDNYPGCECSSVSP. Residues 43-63 traverse the membrane as a helical segment; the sequence is GVLAGIVLGDLVLTLLIALAV. Ca(2+) is bound at residue Asp52. The Cytoplasmic portion of the chain corresponds to 64 to 114; the sequence is YSLGRLVSRGRGTADGTRKQHMAETESPYQELQGQRPEVYSDLNTQRQYYR. Residues 72 to 114 are disordered; it reads RGRGTADGTRKQHMAETESPYQELQGQRPEVYSDLNTQRQYYR. An ITAM domain is found at 81–109; the sequence is RKQHMAETESPYQELQGQRPEVYSDLNTQ. 2 positions are modified to phosphotyrosine: Tyr92 and Tyr103. Over residues 105 to 114 the composition is skewed to polar residues; the sequence is DLNTQRQYYR.

The protein belongs to the TYROBP family. In terms of assembly, homodimer; disulfide-linked. Homotrimer; disulfide-linked. Homotetramer; disulfide-linked. Homotrimers and homotetramers form when low levels of partner receptors are available and is competitive with assembly with interacting receptors. They may represent alternative oligomerization states or may be intermediates in the receptor assembly process. Binding of a metal cation aids in homooligomerization through coordination of the metal ion by the subunits of the oligomer. Interacts with TREM1. Interacts with TREM2. Interacts with CLECSF5. Interacts with CD300LB and CD300C2. Interacts with CD300E. Interacts (via ITAM domain) with SYK (via SH2 domains); activates SYK mediating neutrophils and macrophages integrin-mediated activation. Interacts with KLRC2. Interacts with CD300H. Interacts with KLRD1. Interacts with SIGLEC1. Following ligand binding by associated receptors, tyrosine phosphorylated in the ITAM domain which leads to activation of additional tyrosine kinases and subsequent cell activation.

Its subcellular location is the cell membrane. In terms of biological role, adapter protein which non-covalently associates with activating receptors found on the surface of a variety of immune cells to mediate signaling and cell activation following ligand binding by the receptors. TYROBP is tyrosine-phosphorylated in the ITAM domain following ligand binding by the associated receptors which leads to activation of additional tyrosine kinases and subsequent cell activation. Also has an inhibitory role in some cells. Non-covalently associates with activating receptors of the CD300 family to mediate cell activation. Also mediates cell activation through association with activating receptors of the CD200R family. Required for neutrophil activation mediated by integrin. Required for the activation of myeloid cells mediated by the CLEC5A/MDL1 receptor. Associates with natural killer (NK) cell receptors such as the KLRD1/KLRC2 heterodimer to mediate NK cell activation. Associates with TREM1 to mediate activation of neutrophils and monocytes. Associates with TREM2 on monocyte-derived dendritic cells to mediate up-regulation of chemokine receptor CCR7 and dendritic cell maturation and survival. PAssociation with TREM2 mediates cytokine-induced formation of multinucleated giant cells which are formed by the fusion of macrophages. Stabilizes the TREM2 C-terminal fragment (TREM2-CTF) produced by TREM2 ectodomain shedding which suppresses the release of pro-inflammatory cytokines. In microglia, required with TREM2 for phagocytosis of apoptotic neurons. Required with ITGAM/CD11B in microglia to control production of microglial superoxide ions which promote the neuronal apoptosis that occurs during brain development. Promotes pro-inflammatory responses in microglia following nerve injury which accelerates degeneration of injured neurons. ositively regulates the expression of the IRAK3/IRAK-M kinase and IL10 production by liver dendritic cells and inhibits their T cell allosimulatory ability. Negatively regulates B cell proliferation. Required for CSF1-mediated osteoclast cytoskeletal organization. Positively regulates multinucleation during osteoclast development. The polypeptide is TYRO protein tyrosine kinase-binding protein (Rattus norvegicus (Rat)).